We begin with the raw amino-acid sequence, 142 residues long: 3-hydroxyacyl-[acyl-carrier-protein] dehydratase FabZ (142 aa).

His41 is an active-site residue.

The protein belongs to the thioester dehydratase family. FabZ subfamily.

It is found in the cytoplasm. It carries out the reaction a (3R)-hydroxyacyl-[ACP] = a (2E)-enoyl-[ACP] + H2O. Its function is as follows. Involved in unsaturated fatty acids biosynthesis. Catalyzes the dehydration of short chain beta-hydroxyacyl-ACPs and long chain saturated and unsaturated beta-hydroxyacyl-ACPs. The protein is 3-hydroxyacyl-[acyl-carrier-protein] dehydratase FabZ of Symbiobacterium thermophilum (strain DSM 24528 / JCM 14929 / IAM 14863 / T).